A 281-amino-acid polypeptide reads, in one-letter code: 2,3,4,5-tetrahydropyridine-2,6-dicarboxylate N-succinyltransferase (281 aa).

Positions 108 and 145 each coordinate substrate.

Belongs to the transferase hexapeptide repeat family. Homotrimer.

The protein localises to the cytoplasm. It carries out the reaction (S)-2,3,4,5-tetrahydrodipicolinate + succinyl-CoA + H2O = (S)-2-succinylamino-6-oxoheptanedioate + CoA. It participates in amino-acid biosynthesis; L-lysine biosynthesis via DAP pathway; LL-2,6-diaminopimelate from (S)-tetrahydrodipicolinate (succinylase route): step 1/3. This is 2,3,4,5-tetrahydropyridine-2,6-dicarboxylate N-succinyltransferase from Nitrobacter winogradskyi (strain ATCC 25391 / DSM 10237 / CIP 104748 / NCIMB 11846 / Nb-255).